Here is a 679-residue protein sequence, read N- to C-terminus: PHD finger protein PERSISTENT TAPETAL CELL 1 (679 aa).

The PHD-type zinc finger occupies V620–D670.

Functionally, probable transcriptional activator required for tapetal programmed cell death (PCD) and degeneration, and pollen development in anthers. The protein is PHD finger protein PERSISTENT TAPETAL CELL 1 of Oryza sativa subsp. japonica (Rice).